The primary structure comprises 185 residues: Ribosome-recycling factor (185 aa).

The protein belongs to the RRF family.

It localises to the cytoplasm. In terms of biological role, responsible for the release of ribosomes from messenger RNA at the termination of protein biosynthesis. May increase the efficiency of translation by recycling ribosomes from one round of translation to another. The sequence is that of Ribosome-recycling factor from Pseudoalteromonas atlantica (strain T6c / ATCC BAA-1087).